The following is a 126-amino-acid chain: Fumarate reductase subunit C (126 aa).

Transmembrane regions (helical) follow at residues 30-50 (IFVA…GAGG), 64-84 (VVVV…VTWF), and 105-125 (VLAG…WMVL).

It belongs to the FrdC family. Part of an enzyme complex containing four subunits: a flavoprotein (FrdA), an iron-sulfur protein (FrdB), and two hydrophobic anchor proteins (FrdC and FrdD).

It localises to the cell membrane. Functionally, anchors the catalytic components of the fumarate reductase complex to the cell membrane, binds quinones. The sequence is that of Fumarate reductase subunit C from Mycobacterium tuberculosis (strain ATCC 25177 / H37Ra).